The following is a 127-amino-acid chain: MSAAGARGLRATYHRLLDKVELMLPEKLRPLYNHPAGPRTVFFWAPIMKWGLVCAGLADMARPAEKLSTAQSAVLMATGFIWSRYSLVIIPKNWSLFAVNFFVGAAGASQLFRIWRYNQELKAKAHK.

Over S2–T40 the chain is Mitochondrial matrix. The helical transmembrane segment at V41 to A61 threads the bilayer. The Mitochondrial intermembrane portion of the chain corresponds to R62–S72. The chain crosses the membrane as a helical span at residues A73 to I90. Residues P91–S95 lie on the Mitochondrial matrix side of the membrane. The chain crosses the membrane as a helical span at residues L96–W115. Over R116–K127 the chain is Mitochondrial intermembrane.

It belongs to the mitochondrial pyruvate carrier (MPC) (TC 2.A.105) family. In terms of assembly, homodimer. Homooligomer. Forms heterodimers with MPC1 and MPC1L. The heterodimer is the more stable and dominant form.

The protein resides in the mitochondrion inner membrane. The enzyme catalyses pyruvate(out) + H(+)(out) = pyruvate(in) + H(+)(in). Its function is as follows. Mediates the uptake of pyruvate into mitochondria. The chain is Mitochondrial pyruvate carrier 2 (MPC2) from Homo sapiens (Human).